The sequence spans 350 residues: Holliday junction branch migration complex subunit RuvB (350 aa).

The tract at residues 1 to 183 (MSAERLVNPH…FVAVHRLVFY (183 aa)) is large ATPase domain (RuvB-L). ATP-binding positions include L22, R23, G64, K67, T68, S69, 130–132 (EDF), R173, Y183, and R220. Mg(2+) is bound at residue T68. Residues 184–254 (SDDAMTEIVS…VARDALAQLE (71 aa)) are small ATPAse domain (RuvB-S). The segment at 257 to 350 (ELGLDENDRR…ESGPQQATLF (94 aa)) is head domain (RuvB-H). Residues R312 and R317 each coordinate DNA. Residues 331–350 (YPERTLPADDESGPQQATLF) are disordered.

The protein belongs to the RuvB family. In terms of assembly, homohexamer. Forms an RuvA(8)-RuvB(12)-Holliday junction (HJ) complex. HJ DNA is sandwiched between 2 RuvA tetramers; dsDNA enters through RuvA and exits via RuvB. An RuvB hexamer assembles on each DNA strand where it exits the tetramer. Each RuvB hexamer is contacted by two RuvA subunits (via domain III) on 2 adjacent RuvB subunits; this complex drives branch migration. In the full resolvosome a probable DNA-RuvA(4)-RuvB(12)-RuvC(2) complex forms which resolves the HJ.

It is found in the cytoplasm. It catalyses the reaction ATP + H2O = ADP + phosphate + H(+). The RuvA-RuvB-RuvC complex processes Holliday junction (HJ) DNA during genetic recombination and DNA repair, while the RuvA-RuvB complex plays an important role in the rescue of blocked DNA replication forks via replication fork reversal (RFR). RuvA specifically binds to HJ cruciform DNA, conferring on it an open structure. The RuvB hexamer acts as an ATP-dependent pump, pulling dsDNA into and through the RuvAB complex. RuvB forms 2 homohexamers on either side of HJ DNA bound by 1 or 2 RuvA tetramers; 4 subunits per hexamer contact DNA at a time. Coordinated motions by a converter formed by DNA-disengaged RuvB subunits stimulates ATP hydrolysis and nucleotide exchange. Immobilization of the converter enables RuvB to convert the ATP-contained energy into a lever motion, pulling 2 nucleotides of DNA out of the RuvA tetramer per ATP hydrolyzed, thus driving DNA branch migration. The RuvB motors rotate together with the DNA substrate, which together with the progressing nucleotide cycle form the mechanistic basis for DNA recombination by continuous HJ branch migration. Branch migration allows RuvC to scan DNA until it finds its consensus sequence, where it cleaves and resolves cruciform DNA. This chain is Holliday junction branch migration complex subunit RuvB, found in Chloroflexus aurantiacus (strain ATCC 29366 / DSM 635 / J-10-fl).